The sequence spans 314 residues: Ribosomal RNA small subunit methyltransferase H (314 aa).

S-adenosyl-L-methionine is bound by residues 36–38 (GGH), aspartate 56, phenylalanine 80, aspartate 102, and glutamine 109.

It belongs to the methyltransferase superfamily. RsmH family.

It is found in the cytoplasm. The enzyme catalyses cytidine(1402) in 16S rRNA + S-adenosyl-L-methionine = N(4)-methylcytidine(1402) in 16S rRNA + S-adenosyl-L-homocysteine + H(+). Functionally, specifically methylates the N4 position of cytidine in position 1402 (C1402) of 16S rRNA. The polypeptide is Ribosomal RNA small subunit methyltransferase H (Citrobacter koseri (strain ATCC BAA-895 / CDC 4225-83 / SGSC4696)).